The primary structure comprises 2760 residues: A-kinase anchor protein 13 (2760 aa).

8 disordered regions span residues 356 to 388 (CSHKKNKDTGRPGEGVEPASAVDSRSASHQDSC), 442 to 517 (PDAR…EPKQ), 530 to 577 (AAGA…VLPA), 604 to 711 (SSLD…AAHN), 729 to 857 (EKDL…EQEG), 890 to 940 (GGSI…QEIS), 954 to 1029 (EKAL…ASEA), and 1132 to 1162 (EGTDLSCPTSKSKETPNNEETTQPPARDLPT). Positions 378-388 (DSRSASHQDSC) are enriched in polar residues. Over residues 442-454 (PDARQHSSGRELP) the composition is skewed to basic and acidic residues. The interval 482-504 (QNSKPQVGESAKERLENSDISSA) is important for interaction with PRKAR2A. Residues 530–547 (AAGADAPAEASPAWSPEE) show a composition bias toward low complexity. Polar residues-rich tracts occupy residues 620-638 (KQNSESSAQHAQSLNSQAP), 654-664 (CPQSTETSSGG), and 701-711 (DTVTSDTAAHN). Over residues 769 to 780 (SSFSLASSPESE) the composition is skewed to low complexity. Ser-776 carries the phosphoserine modification. At Thr-801 the chain carries Phosphothreonine. Basic and acidic residues predominate over residues 814–826 (PDGRDLNDTDKVG). Polar residues predominate over residues 839–849 (ELQTSMGNTSP). Over residues 906-931 (GKDKATKCPSVKEDVHSSEMSREDQR) the composition is skewed to basic and acidic residues. Thr-932 carries the post-translational modification Phosphothreonine. Composition is skewed to polar residues over residues 958 to 972 (QHSNSPDTPSACLQT) and 1001 to 1020 (TSLSADSEQKTSSTEQSGSS). A Phosphoserine modification is found at Ser-962. The tract at residues 1213-1228 (SIEETATRIVEAVIKQ) is important for interaction with PRKAR2A. 3 disordered regions span residues 1392–1411 (GVLQRESGSDSDLFHSPSDE), 1425–1508 (LLCD…VPAN), and 1520–1539 (SPFRRHSWGPGKNAASDAEM). The span at 1428 to 1439 (DTTGSSSSTDDT) shows a compositional bias: low complexity. A compositionally biased stretch (polar residues) spans 1449-1472 (GSDVSLPQTSKLNRSRNHQSSNGF). Residues Ser-1450, Ser-1468, Ser-1501, Ser-1526, and Ser-1585 each carry the phosphoserine modification. Residues 1546 to 1695 (QVLGHVVRRP…SRPFHSASAN (150 aa)) are important for interaction with MAP2K3. Residues 1592 to 1628 (GGGVGNKPSSSLEISSANSSELRNPFSGEEQRSSLMS) are disordered. A compositionally biased stretch (low complexity) spans 1600-1611 (SSSLEISSANSS). A phosphoserine mark is found at Ser-1625, Ser-1628, and Ser-1630. Lys-1654 bears the N6-methyllysine mark. The disordered stretch occupies residues 1733–1755 (RNKMSSSKKSKKEKDKKTLNGHT). Residues 1753 to 1800 (GHTFSPIPIVGPINCSQCMKPFTNKDAYTCASCGAFVHKGCRENLASC) form a Phorbol-ester/DAG-type zinc finger. 3 positions are modified to phosphoserine: Ser-1838, Ser-1857, and Ser-1891. The interval 1881–2760 (MSNTWKFLSH…VPAEGEEIFC (880 aa)) is interaction with ESR1. The residue at position 1892 (Thr-1892) is a Phosphothreonine. 2 positions are modified to phosphoserine: Ser-1894 and Ser-1907. One can recognise a DH domain in the interval 1956–2153 (KRQEVIYELM…KDVIGAVDSK (198 aa)). The PH domain occupies 2176–2280 (MRMKSGQMFA…WIQIIQDTIN (105 aa)). Phosphoserine is present on residues Ser-2292 and Ser-2345. A coiled-coil region spans residues 2292 to 2329 (SENEEEKRLLDTKARELKEQLQQKDQQILLLLEEKEMI). Thr-2415 is subject to Phosphothreonine. Residues 2422-2450 (HQLNASKGGEKEEGDDGQDLRRTESDSGL) are disordered. A compositionally biased stretch (basic and acidic residues) spans 2439-2450 (QDLRRTESDSGL). A phosphoserine mark is found at Ser-2511 and Ser-2514. Residues 2516–2632 (LIEQEKQRSL…LSQRQMEQDL (117 aa)) adopt a coiled-coil conformation. Disordered regions lie at residues 2568–2588 (AEREETVRRRQQDLERDREEL) and 2660–2760 (TPSI…EIFC). Composition is skewed to polar residues over residues 2660-2684 (TPSITKSGSLDSELSVSPKRNSISR) and 2696-2711 (SSASQTKVPEGQSQAP). A Phosphoserine modification is found at Ser-2676. The span at 2743 to 2752 (PGDGPAPEVP) shows a compositional bias: low complexity.

Interacts with the cAMP-dependent protein kinase (PKA) holoenzyme and with the regulatory subunit PRKAR2A. Interacts with RHOA. Also interacts with RHOB and RHOC. Identified in a ternary complex with RHOA and PRKAR2A. Identified in a complex with NR3C1 and RHOA. Interacts with BRAF and KSR1. Identified in a complex with BRAF and KSR1. Component of a signaling complex containing at least AKAP13, PKN1, MAPK14, ZAK and MAP2K3. Within this complex, AKAP13 interacts directly with PKN1, which in turn recruits MAPK14, MAP2K3 and ZAK. Interacts (phosphorylated form) with YWHAB and YWHAZ. Interaction with YWHAB inhibits activation of RHOA, interferes with PKN1 binding and activation of MAP kinases. Interacts with GNA12. Interacts with IKBKB. Interacts with ESR1, THRA, PPARA and NME2. Interacts (via the C-terminal domain after the PH domain) with MEF2C and RXRB. Interacts (via the C-terminal domain after the PH domain) with PRKD1. In terms of tissue distribution, detected in bone osteoblasts (at protein level).

The protein localises to the cytoplasm. It localises to the cytosol. Its subcellular location is the cell cortex. The protein resides in the nucleus. It is found in the membrane. Its function is as follows. Scaffold protein that plays an important role in assembling signaling complexes downstream of several types of G protein-coupled receptors. Activates RHOA in response to signaling via G protein-coupled receptors via its function as Rho guanine nucleotide exchange factor. May also activate other Rho family members. Part of a kinase signaling complex that links ADRA1A and ADRA1B adrenergic receptor signaling to the activation of downstream p38 MAP kinases, such as MAPK11 and MAPK14. Part of a signaling complex that links ADRA1B signaling to the activation of RHOA and IKBKB/IKKB, leading to increased NF-kappa-B transcriptional activity. Part of a RHOA-dependent signaling cascade that mediates responses to lysophosphatidic acid (LPA), a signaling molecule that activates G-protein coupled receptors and potentiates transcriptional activation of the glucocorticoid receptor NR3C1. Part of a signaling cascade that stimulates MEF2C-dependent gene expression in response to lysophosphatidic acid (LPA). Part of a signaling pathway that activates MAPK11 and/or MAPK14 and leads to increased transcription activation of the estrogen receptors ESR1 and ESR2. Part of a signaling cascade that links cAMP and EGFR signaling to BRAF signaling and to PKA-mediated phosphorylation of KSR1, leading to the activation of downstream MAP kinases, such as MAPK1 or MAPK3. Functions as a scaffold protein that anchors cAMP-dependent protein kinase (PKA) and PRKD1. This promotes activation of PRKD1, leading to increased phosphorylation of HDAC5 and ultimately cardiomyocyte hypertrophy. Has no guanine nucleotide exchange activity on CDC42, Ras or Rac. Required for normal embryonic heart development, and in particular for normal sarcomere formation in the developing cardiomyocytes. Plays a role in cardiomyocyte growth and cardiac hypertrophy in response to activation of the beta-adrenergic receptor by phenylephrine or isoproterenol. Required for normal adaptive cardiac hypertrophy in response to pressure overload. Plays a role in osteogenesis. This Rattus norvegicus (Rat) protein is A-kinase anchor protein 13.